A 92-amino-acid chain; its full sequence is UPF0728 protein C10orf53 homolog (92 aa).

Belongs to the UPF0728 family.

This chain is UPF0728 protein C10orf53 homolog, found in Danio rerio (Zebrafish).